The chain runs to 610 residues: MSDQFDAKAFLKTVTSQPGVYRMYDAGGTVIYVGKAKDLKKRLSSYFRSNLASRKTEALVAQIQQIDVTVTHTETEALLLEHNYIKLYQPRYNVLLRDDKSYPFIFLSGDTHPRLAMHRGAKHAKGEYFGPFPNGYAVRETLALLQKIFPIRQCENSVYRNRSRPCLQYQIGRCLGPCVEGLVSEEEYAQQVEYVRLFLSGKDDQVLTQLISRMETASQNLEFEEAARIRDQIQAVRRVTEKQFVSNTGDDLDVIGVAFDAGMACVHVLFIRQGKVLGSRSYFPKVPGGTELSEVVETFVGQFYLQGSQMRTLPGEILLDFNLSDKTLLADSLSELAGRKINVQTKPRGDRARYLKLARTNAATALTSKLSQQSTVHQRLTALASVLKLPEVKRMECFDISHTMGEQTVASCVVFDANGPLRAEYRRYNITGITPGDDYAAMNQVLRRRYGKAIDDSKIPDVILIDGGKGQLAQAKNVFAELDVSWDKNHPLLLGVAKGVDRKAGLETLFFEPEGEGFSLPPDSPALHVIQHIRDESHDHAIGGHRKKRAKVKNTSSLETIEGVGPKRRQMLLKYMGGLQGLRNASVEEIAKVPGISQGLAEKIFWSLKH.

In terms of domain architecture, GIY-YIG spans 16-94; the sequence is SQPGVYRMYD…IKLYQPRYNV (79 aa). One can recognise a UVR domain in the interval 204-239; that stretch reads DQVLTQLISRMETASQNLEFEEAARIRDQIQAVRRV.

It belongs to the UvrC family. As to quaternary structure, interacts with UvrB in an incision complex.

The protein resides in the cytoplasm. The UvrABC repair system catalyzes the recognition and processing of DNA lesions. UvrC both incises the 5' and 3' sides of the lesion. The N-terminal half is responsible for the 3' incision and the C-terminal half is responsible for the 5' incision. This chain is UvrABC system protein C, found in Escherichia coli (strain ATCC 8739 / DSM 1576 / NBRC 3972 / NCIMB 8545 / WDCM 00012 / Crooks).